The chain runs to 318 residues: Acetyl-coenzyme A carboxylase carboxyl transferase subunit alpha (318 aa).

Residues 38 to 292 (KLEKRLAKLE…NKTITKSLHA (255 aa)) enclose the CoA carboxyltransferase C-terminal domain.

Belongs to the AccA family. In terms of assembly, acetyl-CoA carboxylase is a heterohexamer composed of biotin carboxyl carrier protein (AccB), biotin carboxylase (AccC) and two subunits each of ACCase subunit alpha (AccA) and ACCase subunit beta (AccD).

The protein localises to the cytoplasm. It carries out the reaction N(6)-carboxybiotinyl-L-lysyl-[protein] + acetyl-CoA = N(6)-biotinyl-L-lysyl-[protein] + malonyl-CoA. It functions in the pathway lipid metabolism; malonyl-CoA biosynthesis; malonyl-CoA from acetyl-CoA: step 1/1. Component of the acetyl coenzyme A carboxylase (ACC) complex. First, biotin carboxylase catalyzes the carboxylation of biotin on its carrier protein (BCCP) and then the CO(2) group is transferred by the carboxyltransferase to acetyl-CoA to form malonyl-CoA. The chain is Acetyl-coenzyme A carboxylase carboxyl transferase subunit alpha from Listeria monocytogenes serovar 1/2a (strain ATCC BAA-679 / EGD-e).